The primary structure comprises 278 residues: Thiazole synthase (278 aa).

The active-site Schiff-base intermediate with DXP is the K109. Residues G170, 197 to 198 (AG), and 219 to 220 (NT) contribute to the 1-deoxy-D-xylulose 5-phosphate site.

Belongs to the ThiG family. Homotetramer. Forms heterodimers with either ThiH or ThiS.

It localises to the cytoplasm. The catalysed reaction is [ThiS sulfur-carrier protein]-C-terminal-Gly-aminoethanethioate + 2-iminoacetate + 1-deoxy-D-xylulose 5-phosphate = [ThiS sulfur-carrier protein]-C-terminal Gly-Gly + 2-[(2R,5Z)-2-carboxy-4-methylthiazol-5(2H)-ylidene]ethyl phosphate + 2 H2O + H(+). The protein operates within cofactor biosynthesis; thiamine diphosphate biosynthesis. In terms of biological role, catalyzes the rearrangement of 1-deoxy-D-xylulose 5-phosphate (DXP) to produce the thiazole phosphate moiety of thiamine. Sulfur is provided by the thiocarboxylate moiety of the carrier protein ThiS. In vitro, sulfur can be provided by H(2)S. The chain is Thiazole synthase from Cupriavidus taiwanensis (strain DSM 17343 / BCRC 17206 / CCUG 44338 / CIP 107171 / LMG 19424 / R1) (Ralstonia taiwanensis (strain LMG 19424)).